The sequence spans 91 residues: DNA-directed RNA polymerase subunit omega (91 aa).

It belongs to the RNA polymerase subunit omega family. The RNAP catalytic core consists of 2 alpha, 1 beta, 1 beta' and 1 omega subunit. When a sigma factor is associated with the core the holoenzyme is formed, which can initiate transcription.

The catalysed reaction is RNA(n) + a ribonucleoside 5'-triphosphate = RNA(n+1) + diphosphate. Functionally, promotes RNA polymerase assembly. Latches the N- and C-terminal regions of the beta' subunit thereby facilitating its interaction with the beta and alpha subunits. The chain is DNA-directed RNA polymerase subunit omega from Proteus mirabilis (strain HI4320).